The sequence spans 993 residues: DNA-binding protein SMUBP-2 (993 aa).

Position 2 is an N-acetylalanine (alanine 2). ATP-binding positions include 214–221, glutamine 403, tyrosine 442, and glutamate 571; that span reads GPPGTGKT. Positions 638-785 are SS DNA-binding; the sequence is TAFEYLDDIV…KRRFITVSKR (148 aa). Disordered stretches follow at residues 651–723, 782–828, and 841–879; these read YSHE…VESQ, VSKR…PDQP, and VRSA…DLPT. Composition is skewed to polar residues over residues 653 to 662 and 669 to 681; these read HENSQGSSHA and PATS…QRQE. The 64-residue stretch at 723–786 folds into the R3H domain; sequence QDGVDHFRAM…RRFITVSKRA (64 aa). The span at 818 to 828 shows a compositional bias: basic and acidic residues; sequence PPREQRGPDQP. A compositionally biased stretch (polar residues) spans 842–859; it reads RSAQGQPASKEQQASGQQ. The Nuclear localization signal signature appears at 864 to 868; that stretch reads KKKKK. The AN1-type zinc-finger motif lies at 891–940; that stretch reads VKADNTCGFAKCTAGVTTLGQFCQLCSRRYCLSHHLPEIHGCGERARAHA. Residues cysteine 897, cysteine 902, cysteine 913, cysteine 916, cysteine 921, histidine 924, histidine 930, and cysteine 932 each coordinate Zn(2+). A disordered region spans residues 971–993; that stretch reads RRLDKKLSELSNQRTSRRKERGT.

The protein belongs to the DNA2/NAM7 helicase family. In terms of assembly, homooligomer. Interacts with RUVBL1. Interacts with RUVBL2. Interacts with GTF3C1. Interacts with ABT1. Interacts with ribosomes. Expressed in all tissues examined. Expressed in the developing and adult human brain, with highest expression in the cerebellum. Moderately expressed in fibroblasts.

It is found in the nucleus. Its subcellular location is the cytoplasm. The protein resides in the cell projection. It localises to the axon. It carries out the reaction ATP + H2O = ADP + phosphate + H(+). Its function is as follows. 5' to 3' helicase that unwinds RNA and DNA duplexes in an ATP-dependent reaction. Specific to 5'-phosphorylated single-stranded guanine-rich sequences. May play a role in RNA metabolism, ribosome biogenesis or initiation of translation. May play a role in regulation of transcription. Interacts with tRNA-Tyr. The protein is DNA-binding protein SMUBP-2 (IGHMBP2) of Homo sapiens (Human).